The following is a 471-amino-acid chain: 5-hydroxytryptamine receptor 2A (471 aa).

Topologically, residues 1–80 (MDILCEENTS…LQEKNWSALL (80 aa)) are extracellular. Residues asparagine 8, asparagine 38, asparagine 44, asparagine 51, and asparagine 54 are each glycosylated (N-linked (GlcNAc...) asparagine). Residues 81–97 (TAVVIILTIAGNILVIM) traverse the membrane as a helical segment. Topologically, residues 98–111 (AVSLEKKLQNATNY) are cytoplasmic. The helical transmembrane segment at 112-137 (FLMSLAIADMLLGFLVMPVSMLTILY) threads the bilayer. Topologically, residues 138–146 (GYRWPLPSK) are extracellular. A helical transmembrane segment spans residues 147-171 (LCAVWIYLDVLFSTASIMHLCAISL). A disulfide bond links cysteine 148 and cysteine 227. Residue aspartate 155 coordinates serotonin. A DRY motif; important for ligand-induced conformation changes motif is present at residues 172–174 (DRY). At 172-191 (DRYVAIQNPIHHSRFNSRTK) the chain is on the cytoplasmic side. The chain crosses the membrane as a helical span at residues 192–215 (AFLKIIAVWTISVGISMPIPVFGL). Topologically, residues 216–232 (QDDSKVFKEGSCLLADD) are extracellular. Residues 233 to 258 (NFVLIGSFVSFFIPLTIMVITYFLTI) traverse the membrane as a helical segment. At 259–322 (KSLQKEATLC…QSISNEQKAC (64 aa)) the chain is on the cytoplasmic side. Residue serine 280 is modified to Phosphoserine. A helical membrane pass occupies residues 323-348 (KVLGIVFFLFVVMWCPFFITNIMAVI). Asparagine 343 serves as a coordination point for serotonin. Cysteine 349 and cysteine 353 are joined by a disulfide. Over 349-356 (CKESCNED) the chain is Extracellular. Residues 357–382 (VIGALLNVFVWIGYLSSAVNPLVYTL) traverse the membrane as a helical segment. Positions 376-380 (NPLVY) match the NPxxY motif; important for ligand-induced conformation changes and signaling motif. Topologically, residues 383 to 471 (FNKTYRSAFS…DGVNEKVSCV (89 aa)) are cytoplasmic. Basic and acidic residues predominate over residues 451-465 (QHSEEASKDNSDGVN). A disordered region spans residues 451 to 471 (QHSEEASKDNSDGVNEKVSCV). The short motif at 469–471 (SCV) is the PDZ-binding element.

The protein belongs to the G-protein coupled receptor 1 family. Interacts (via C-terminus) with MPDZ and PATJ. May interact (via C-terminus) with MPP3, PRDX6, DLG4, DLG1, CASK, APBA1 and MAGI2. Interacts with GRM2 and DRD2; this may affect signaling. As to expression, detected in brain cortex (at protein level). Detected in blood platelets.

The protein localises to the cell membrane. The protein resides in the cell projection. Its subcellular location is the dendrite. It localises to the axon. It is found in the cytoplasmic vesicle. The protein localises to the membrane. The protein resides in the caveola. Its subcellular location is the presynapse. Its activity is regulated as follows. G-protein coupled receptor activity is regulated by lipids: oleamide increases HTR2A-mediated activity. Inhibited by IHCH-7179 small molecule: IHCH-7179 acts both as an agonist activator for HTR1A and as an antagonist inhibitor for HTR2A. Its function is as follows. G-protein coupled receptor for 5-hydroxytryptamine (serotonin). Also functions as a receptor for various drugs and psychoactive substances, including mescaline, psilocybin, 1-(2,5-dimethoxy-4-iodophenyl)-2-aminopropane (DOI) and lysergic acid diethylamide (LSD). Ligand binding causes a conformation change that triggers signaling via guanine nucleotide-binding proteins (G proteins) and modulates the activity of downstream effectors. HTR2A is coupled to G(q)/G(11) G alpha proteins and activates phospholipase C-beta, releasing diacylglycerol (DAG) and inositol 1,4,5-trisphosphate (IP3) second messengers that modulate the activity of phosphatidylinositol 3-kinase and promote the release of Ca(2+) ions from intracellular stores, respectively. Beta-arrestin family members inhibit signaling via G proteins and mediate activation of alternative signaling pathways. Affects neural activity, perception, cognition and mood. Plays a role in the regulation of behavior, including responses to anxiogenic situations and psychoactive substances. Plays a role in intestinal smooth muscle contraction, and may play a role in arterial vasoconstriction. In terms of biological role, (Microbial infection) Acts as a receptor for human JC polyomavirus/JCPyV. The chain is 5-hydroxytryptamine receptor 2A from Homo sapiens (Human).